A 362-amino-acid polypeptide reads, in one-letter code: UDP-3-O-acylglucosamine N-acyltransferase 1 (362 aa).

His258 serves as the catalytic Proton acceptor.

It belongs to the transferase hexapeptide repeat family. LpxD subfamily. As to quaternary structure, homotrimer.

It catalyses the reaction a UDP-3-O-[(3R)-3-hydroxyacyl]-alpha-D-glucosamine + a (3R)-hydroxyacyl-[ACP] = a UDP-2-N,3-O-bis[(3R)-3-hydroxyacyl]-alpha-D-glucosamine + holo-[ACP] + H(+). The protein operates within bacterial outer membrane biogenesis; LPS lipid A biosynthesis. Functionally, catalyzes the N-acylation of UDP-3-O-acylglucosamine using 3-hydroxyacyl-ACP as the acyl donor. Is involved in the biosynthesis of lipid A, a phosphorylated glycolipid that anchors the lipopolysaccharide to the outer membrane of the cell. The protein is UDP-3-O-acylglucosamine N-acyltransferase 1 of Nitrobacter winogradskyi (strain ATCC 25391 / DSM 10237 / CIP 104748 / NCIMB 11846 / Nb-255).